Here is a 501-residue protein sequence, read N- to C-terminus: Cytochrome P450 2J4 (501 aa).

A run of 2 helical transmembrane segments spans residues Ile-12 to Ala-32 and Asn-77 to Ile-97. Cys-447 contributes to the heme binding site.

This sequence belongs to the cytochrome P450 family. Heme is required as a cofactor. In terms of tissue distribution, expressed in small intestinal enterocytes (at protein level). In the intestinal crypt, expressed at higher levels in the mature villous cells than in undifferentiated crypt cells (at protein level). Expressed in liver, kidney, lung, and olfactory mucosa (at protein level).

The protein localises to the endoplasmic reticulum membrane. Its subcellular location is the microsome membrane. It carries out the reaction an organic molecule + reduced [NADPH--hemoprotein reductase] + O2 = an alcohol + oxidized [NADPH--hemoprotein reductase] + H2O + H(+). The catalysed reaction is (5Z,8Z,11Z,14Z)-eicosatetraenoate + reduced [NADPH--hemoprotein reductase] + O2 = 19-hydroxy-(5Z,8Z,11Z,14Z)-eicosatetraenoate + oxidized [NADPH--hemoprotein reductase] + H2O + H(+). It catalyses the reaction all-trans-retinal + reduced [NADPH--hemoprotein reductase] + O2 = all-trans-retinoate + oxidized [NADPH--hemoprotein reductase] + H2O + 2 H(+). The enzyme catalyses 9-cis-retinal + reduced [NADPH--hemoprotein reductase] + O2 = 9-cis-retinoate + oxidized [NADPH--hemoprotein reductase] + H2O + 2 H(+). Its pathway is lipid metabolism; arachidonate metabolism. It functions in the pathway cofactor metabolism; retinol metabolism. Functionally, a cytochrome P450 monooxygenase that may play a major role in intestinal retinoid metabolism. Catalyzes the oxidative transformation of all-trans retinal and 9-cis-retinal to the corresponding active forms all-trans and 9-cis retinoic acids. Catalyzes the hydroxylation of carbon-hydrogen bonds. Hydroxylates arachidonic acid predominantly at the omega-1 position. Mechanistically, uses molecular oxygen inserting one oxygen atom into a substrate, and reducing the second into a water molecule, with two electrons provided by NADPH via cytochrome P450 reductase (CPR; NADPH--hemoprotein reductase). In Rattus norvegicus (Rat), this protein is Cytochrome P450 2J4.